Reading from the N-terminus, the 779-residue chain is Aconitate hydratase, mitochondrial (779 aa).

A mitochondrion-targeting transit peptide spans 1-28 (MIAMDRIARIPIARWTSRAFRVSAAARQ). Substrate-binding positions include glutamine 97 and 190 to 192 (DSH). Residues cysteine 383, cysteine 446, and cysteine 449 each contribute to the [4Fe-4S] cluster site. Residues arginine 472, arginine 477, arginine 605, and 668-669 (SR) contribute to the substrate site.

The protein belongs to the aconitase/IPM isomerase family. As to quaternary structure, monomer. The cofactor is [4Fe-4S] cluster.

The protein localises to the mitochondrion. It carries out the reaction citrate = D-threo-isocitrate. It functions in the pathway carbohydrate metabolism; tricarboxylic acid cycle; isocitrate from oxaloacetate: step 2/2. Its function is as follows. Catalyzes the isomerization of citrate to isocitrate via cis-aconitate. In Gracilaria gracilis (Red alga), this protein is Aconitate hydratase, mitochondrial.